The following is a 483-amino-acid chain: MSLPDISRRRSPVPQEDWPLTPNALRPSPFPNPVLQALYSLSRVLLFPTYWSLDQLLGCWAPSVRSKSLGWFKVLAGSGVLLPLVVVGLPLALVGLALWLPLQVWRRPFCYQPPPACWVWPQPWHPPAERRRCFVFLTANLCLLPHGLAHFNNLSHSLQRAEAVGAALLDSLQSSQYRVSECSQPPPRVPGGELKATLPMGLDFVCLQEVFDLRAARRLVRVLVPNLGPVIYDVGTFGLMAGPYIKVLGSGLLLASRYPLLRATFRCFPNARREDAMASKGLLSVQAQLGIVDGHPIVGYLHCTHLHAPVEDGHIRCKQLTLLLEWVEEFEAENRQSDEAVAFSVLLGDLNFDNCSQDHAKEQGHKLFSCFQDPCRLGVCQEQPWALGTILNSSMLRHSIACSPEMLRRALRQEKGRRLYLSGPLHGSYPAQSWKGRRLDYITYRRVPGSRLSPEAEQVTFSTAFAGLTDHLAMGLKLQVVCS.

The tract at residues 1 to 20 is disordered; it reads MSLPDISRRRSPVPQEDWPL. The chain crosses the membrane as a helical span at residues 80-100; that stretch reads VLLPLVVVGLPLALVGLALWL. Glu-209 is a binding site for Mg(2+). His-471 (proton acceptor) is an active-site residue.

This sequence belongs to the neutral sphingomyelinase family. It depends on Mg(2+) as a cofactor. The cofactor is Mn(2+). As to expression, highly expressed in testis, pancreas, epididymis, and brain.

It is found in the mitochondrion inner membrane. The protein localises to the endoplasmic reticulum membrane. The enzyme catalyses a sphingomyelin + H2O = phosphocholine + an N-acylsphing-4-enine + H(+). The catalysed reaction is N-(hexadecanoyl)-sphing-4-enine-1-phosphocholine + H2O = N-hexadecanoylsphing-4-enine + phosphocholine + H(+). Its pathway is lipid metabolism; sphingolipid metabolism. Its activity is regulated as follows. Activated by anionic phospholipids, specially cardiolipin and phosphatidylserine. Catalyzes the hydrolysis of membrane sphingomyelin to form phosphorylcholine and ceramide. This is Sphingomyelin phosphodiesterase 5 from Mus musculus (Mouse).